Here is a 523-residue protein sequence, read N- to C-terminus: Polyamine aminopropyltransferase (523 aa).

7 consecutive transmembrane segments (helical) span residues 20–40 (VLLA…LALL), 51–71 (IVAT…GALL), 88–108 (AVLG…FAFL), 116–136 (LVLA…VPLL), 164–184 (LGAL…LGMI), 186–206 (GAAV…IFLL), and 215–235 (LVTA…LLVH). Residues 203 to 478 (IFLLRHVVSG…APTPAVPSTA (276 aa)) are spermidine synthase. A PABS domain is found at 231 to 465 (TLLVHSHDIE…GDWGFALARL (235 aa)). Gln-261 is a binding site for S-methyl-5'-thioadenosine. Asp-313 contacts spermidine. Residues Glu-333 and 365–366 (DA) each bind S-methyl-5'-thioadenosine. The active-site Proton acceptor is Asp-386.

The protein belongs to the spermidine/spermine synthase family. In terms of assembly, homodimer or homotetramer.

The protein resides in the cell membrane. It carries out the reaction S-adenosyl 3-(methylsulfanyl)propylamine + putrescine = S-methyl-5'-thioadenosine + spermidine + H(+). It functions in the pathway amine and polyamine biosynthesis; spermidine biosynthesis; spermidine from putrescine: step 1/1. Catalyzes the irreversible transfer of a propylamine group from the amino donor S-adenosylmethioninamine (decarboxy-AdoMet) to putrescine (1,4-diaminobutane) to yield spermidine. This chain is Polyamine aminopropyltransferase, found in Mycobacterium bovis (strain ATCC BAA-935 / AF2122/97).